The chain runs to 182 residues: Methyl-CpG-binding domain-containing protein 5 (182 aa).

2 disordered regions span residues 1–56 and 80–126; these read MSNG…GTVD and HGTP…KPLN. The MBD domain maps to 25–101; sequence KRATPGDDNW…ENGDSHSEHS (77 aa). Basic and acidic residues predominate over residues 92-105; sequence ENGDSHSEHSEGRG. A compositionally biased stretch (basic residues) spans 106 to 115; sequence SARRQTKSNK.

In terms of assembly, homodimer and heterodimer with MBD6. Interacts with DDM1 via its MBD domain. In terms of tissue distribution, mostly expressed in flowers, and, to a lower extent, in seedlings, buds, stems and mature seeds, but barely in roots, exclusively in root meristem cells at tips (at protein level).

Its subcellular location is the nucleus. It is found in the chromosome. Functionally, transcriptional regulator that binds CpG islands in promoters where the DNA is methylated at position 5 of cytosine within CpG dinucleotides. In addition, binds specifically methylated m(5)CpNpN but not m(5)CpNpG (N is A, T or C). Plays probably a role in gene silencing. This chain is Methyl-CpG-binding domain-containing protein 5 (MBD5), found in Arabidopsis thaliana (Mouse-ear cress).